Here is a 448-residue protein sequence, read N- to C-terminus: Tubby-like F-box protein 3 (448 aa).

Residues E56–K102 enclose the F-box domain. Residues P387 to A403 show a composition bias toward pro residues. The tract at residues P387–E406 is disordered.

This sequence belongs to the TUB family. Expressed in roots, leaves, flowers and seeds.

This Oryza sativa subsp. japonica (Rice) protein is Tubby-like F-box protein 3 (TULP3).